Consider the following 227-residue polypeptide: Cytochrome c oxidase subunit 2 (227 aa).

The Mitochondrial intermembrane segment spans residues 1-14 (MAHPVQLGLQDATS). The helical transmembrane segment at 15-45 (PVMEELITFHDHALMAMSLISLLVLYALFST) threads the bilayer. Residues 46–59 (LTTKLTNTNITDAQ) are Mitochondrial matrix-facing. Residues 60 to 87 (EMEIIWTILPAIILVLIALPSLRILYLT) form a helical membrane-spanning segment. Topologically, residues 88–227 (DEVNNPSFTI…IFEMGPVFTL (140 aa)) are mitochondrial intermembrane. The Cu cation site is built by His161, Cys196, Glu198, Cys200, His204, and Met207. Glu198 provides a ligand contact to Mg(2+).

The protein belongs to the cytochrome c oxidase subunit 2 family. In terms of assembly, component of the cytochrome c oxidase (complex IV, CIV), a multisubunit enzyme composed of 14 subunits. The complex is composed of a catalytic core of 3 subunits MT-CO1, MT-CO2 and MT-CO3, encoded in the mitochondrial DNA, and 11 supernumerary subunits COX4I, COX5A, COX5B, COX6A, COX6B, COX6C, COX7A, COX7B, COX7C, COX8 and NDUFA4, which are encoded in the nuclear genome. The complex exists as a monomer or a dimer and forms supercomplexes (SCs) in the inner mitochondrial membrane with NADH-ubiquinone oxidoreductase (complex I, CI) and ubiquinol-cytochrome c oxidoreductase (cytochrome b-c1 complex, complex III, CIII), resulting in different assemblies (supercomplex SCI(1)III(2)IV(1) and megacomplex MCI(2)III(2)IV(2)). Found in a complex with TMEM177, COA6, COX18, COX20, SCO1 and SCO2. Interacts with TMEM177 in a COX20-dependent manner. Interacts with COX20. Interacts with COX16. Requires Cu cation as cofactor.

The protein resides in the mitochondrion inner membrane. The enzyme catalyses 4 Fe(II)-[cytochrome c] + O2 + 8 H(+)(in) = 4 Fe(III)-[cytochrome c] + 2 H2O + 4 H(+)(out). In terms of biological role, component of the cytochrome c oxidase, the last enzyme in the mitochondrial electron transport chain which drives oxidative phosphorylation. The respiratory chain contains 3 multisubunit complexes succinate dehydrogenase (complex II, CII), ubiquinol-cytochrome c oxidoreductase (cytochrome b-c1 complex, complex III, CIII) and cytochrome c oxidase (complex IV, CIV), that cooperate to transfer electrons derived from NADH and succinate to molecular oxygen, creating an electrochemical gradient over the inner membrane that drives transmembrane transport and the ATP synthase. Cytochrome c oxidase is the component of the respiratory chain that catalyzes the reduction of oxygen to water. Electrons originating from reduced cytochrome c in the intermembrane space (IMS) are transferred via the dinuclear copper A center (CU(A)) of subunit 2 and heme A of subunit 1 to the active site in subunit 1, a binuclear center (BNC) formed by heme A3 and copper B (CU(B)). The BNC reduces molecular oxygen to 2 water molecules using 4 electrons from cytochrome c in the IMS and 4 protons from the mitochondrial matrix. The chain is Cytochrome c oxidase subunit 2 (MT-CO2) from Cercocebus galeritus (Tana river mangabey).